The sequence spans 290 residues: Beta carbonic anhydrase 6, mitochondrial (290 aa).

A mitochondrion-targeting transit peptide spans M1 to Q20. S122 carries the phosphoserine modification. Residue C226 is modified to S-nitrosocysteine.

Belongs to the beta-class carbonic anhydrase family. As to expression, strongly expressed in aerial tissues including leaves, stems, flowers and siliques, and, to a lower extent, in roots. Accumulates in guard cells.

The protein localises to the mitochondrion. It carries out the reaction hydrogencarbonate + H(+) = CO2 + H2O. In terms of biological role, reversible hydration of carbon dioxide. This is Beta carbonic anhydrase 6, mitochondrial (BCA6) from Arabidopsis thaliana (Mouse-ear cress).